The primary structure comprises 467 residues: ATP-dependent protease ATPase subunit HslU (467 aa).

ATP contacts are provided by residues Val22 and 64 to 69 (GVGKTE). A disordered region spans residues 166–185 (GQNQDEEEEPPTEEIKTKRS). 3 residues coordinate ATP: Asp280, Glu345, and Arg417.

The protein belongs to the ClpX chaperone family. HslU subfamily. In terms of assembly, a double ring-shaped homohexamer of HslV is capped on each side by a ring-shaped HslU homohexamer. The assembly of the HslU/HslV complex is dependent on binding of ATP.

Its subcellular location is the cytoplasm. ATPase subunit of a proteasome-like degradation complex; this subunit has chaperone activity. The binding of ATP and its subsequent hydrolysis by HslU are essential for unfolding of protein substrates subsequently hydrolyzed by HslV. HslU recognizes the N-terminal part of its protein substrates and unfolds these before they are guided to HslV for hydrolysis. This is ATP-dependent protease ATPase subunit HslU from Staphylococcus epidermidis (strain ATCC 35984 / DSM 28319 / BCRC 17069 / CCUG 31568 / BM 3577 / RP62A).